The sequence spans 224 residues: Thymidylate kinase (224 aa).

Residue 13–20 (GGEGAGKS) coordinates ATP.

This sequence belongs to the thymidylate kinase family.

The enzyme catalyses dTMP + ATP = dTDP + ADP. In terms of biological role, phosphorylation of dTMP to form dTDP in both de novo and salvage pathways of dTTP synthesis. The chain is Thymidylate kinase from Agrobacterium fabrum (strain C58 / ATCC 33970) (Agrobacterium tumefaciens (strain C58)).